The sequence spans 332 residues: Probable ABC transporter permease protein YphD (332 aa).

Transmembrane regions (helical) follow at residues 28 to 48 (GLLV…PGFI), 63 to 83 (IGIA…DVSV), 84 to 104 (GPMV…EVPL), 105 to 125 (AVAC…AGVL), 131 to 151 (VPSF…GLFM), 172 to 192 (FLGV…FVFI), 222 to 242 (VRIL…ILLA), 251 to 271 (GAAN…GTAL), 278 to 298 (LFGT…LVLL), and 303 to 323 (FFQQ…NILL).

The protein belongs to the binding-protein-dependent transport system permease family. AraH/RbsC subfamily.

It is found in the cell inner membrane. Probably part of the binding-protein-dependent transport system YphDEF. Probably responsible for the translocation of the substrate across the membrane. The chain is Probable ABC transporter permease protein YphD (yphD) from Escherichia coli (strain K12).